A 319-amino-acid chain; its full sequence is Sulfate adenylyltransferase subunit 2 (319 aa).

Disordered stretches follow at residues 1–22 (MNPGRGGAYAAGRDGTRGTRRP) and 296–319 (RGATRADDKLSEAAMEDRKREGYF).

This sequence belongs to the PAPS reductase family. CysD subfamily.

It carries out the reaction sulfate + ATP + H(+) = adenosine 5'-phosphosulfate + diphosphate. It participates in antibiotic biosynthesis; mitomycin C biosynthesis. Its function is as follows. With CysN forms the ATP sulfurylase (ATPS) that catalyzes the adenylation of sulfate producing adenosine 5'-phosphosulfate (APS) and diphosphate, the first enzymatic step in sulfur assimilation pathway. APS synthesis involves the formation of a high-energy phosphoric-sulfuric acid anhydride bond driven by GTP hydrolysis by CysN coupled to ATP hydrolysis by CysD. This chain is Sulfate adenylyltransferase subunit 2 (mmcV), found in Streptomyces lavendulae.